The following is a 363-amino-acid chain: 3-isopropylmalate dehydrogenase (363 aa).

Position 76-89 (76-89 (GPKWDTLPGHLRPE)) interacts with NAD(+). Residues arginine 96, arginine 106, arginine 134, and aspartate 223 each coordinate substrate. Mg(2+) contacts are provided by aspartate 223, aspartate 247, and aspartate 251. 281–293 (GSAPDIAGKGVAN) provides a ligand contact to NAD(+).

This sequence belongs to the isocitrate and isopropylmalate dehydrogenases family. LeuB type 1 subfamily. As to quaternary structure, homodimer. Mg(2+) is required as a cofactor. It depends on Mn(2+) as a cofactor.

Its subcellular location is the cytoplasm. The enzyme catalyses (2R,3S)-3-isopropylmalate + NAD(+) = 4-methyl-2-oxopentanoate + CO2 + NADH. It participates in amino-acid biosynthesis; L-leucine biosynthesis; L-leucine from 3-methyl-2-oxobutanoate: step 3/4. Catalyzes the oxidation of 3-carboxy-2-hydroxy-4-methylpentanoate (3-isopropylmalate) to 3-carboxy-4-methyl-2-oxopentanoate. The product decarboxylates to 4-methyl-2 oxopentanoate. This is 3-isopropylmalate dehydrogenase from Halalkalibacterium halodurans (strain ATCC BAA-125 / DSM 18197 / FERM 7344 / JCM 9153 / C-125) (Bacillus halodurans).